A 93-amino-acid chain; its full sequence is UPF0358 protein BBR47_22520 (93 aa).

Belongs to the UPF0358 family.

The chain is UPF0358 protein BBR47_22520 from Brevibacillus brevis (strain 47 / JCM 6285 / NBRC 100599).